A 298-amino-acid polypeptide reads, in one-letter code: Glutamyl-Q tRNA(Asp) synthetase (298 aa).

Residues 9–13 (RFAPS) and E45 contribute to the L-glutamate site. Positions 12–22 (PSPSGELHFGS) match the 'HIGH' region motif. The Zn(2+) site is built by C101, C103, Y115, and C119. Positions 172 and 190 each coordinate L-glutamate. Positions 228 to 232 (KLSKQ) match the 'KMSKS' region motif. Position 231 (K231) interacts with ATP.

It belongs to the class-I aminoacyl-tRNA synthetase family. GluQ subfamily. The cofactor is Zn(2+).

In terms of biological role, catalyzes the tRNA-independent activation of glutamate in presence of ATP and the subsequent transfer of glutamate onto a tRNA(Asp). Glutamate is transferred on the 2-amino-5-(4,5-dihydroxy-2-cyclopenten-1-yl) moiety of the queuosine in the wobble position of the QUC anticodon. The polypeptide is Glutamyl-Q tRNA(Asp) synthetase (Salmonella typhimurium (strain LT2 / SGSC1412 / ATCC 700720)).